The primary structure comprises 181 residues: 3-hydroxyanthranilate 3,4-dioxygenase (181 aa).

Arg-46 contributes to the O2 binding site. Residues His-50, Glu-56, and His-95 each contribute to the Fe cation site. Glu-56 contacts substrate. Residues Arg-99 and Glu-109 each contribute to the substrate site.

The protein belongs to the 3-HAO family. It depends on Fe(2+) as a cofactor.

The protein resides in the cytoplasm. It catalyses the reaction 3-hydroxyanthranilate + O2 = (2Z,4Z)-2-amino-3-carboxymuconate 6-semialdehyde. It participates in cofactor biosynthesis; NAD(+) biosynthesis; quinolinate from L-kynurenine: step 3/3. In terms of biological role, catalyzes the oxidative ring opening of 3-hydroxyanthranilate to 2-amino-3-carboxymuconate semialdehyde, which spontaneously cyclizes to quinolinate. The polypeptide is 3-hydroxyanthranilate 3,4-dioxygenase (Mycosarcoma maydis (Corn smut fungus)).